The following is a 549-amino-acid chain: Oxygen-dependent choline dehydrogenase (549 aa).

4 to 33 contributes to the FAD binding site; it reads DFVIIGSGSAGSAMAYRLSEDGRYSVIVIE. H465 functions as the Proton acceptor in the catalytic mechanism.

It belongs to the GMC oxidoreductase family. FAD serves as cofactor.

It carries out the reaction choline + A = betaine aldehyde + AH2. The enzyme catalyses betaine aldehyde + NAD(+) + H2O = glycine betaine + NADH + 2 H(+). It functions in the pathway amine and polyamine biosynthesis; betaine biosynthesis via choline pathway; betaine aldehyde from choline (cytochrome c reductase route): step 1/1. Its function is as follows. Involved in the biosynthesis of the osmoprotectant glycine betaine. Catalyzes the oxidation of choline to betaine aldehyde and betaine aldehyde to glycine betaine at the same rate. This Brucella ovis (strain ATCC 25840 / 63/290 / NCTC 10512) protein is Oxygen-dependent choline dehydrogenase.